Consider the following 439-residue polypeptide: MREIIHLQTGQCGNQVGCKFWETISGEHGIDQTGRYVGTSDNQLERINVYYNEASSKKYVPRAVLIDLEPGTMDAVRQGPFGELFRPDNFVFGQSGAGNNWAKGHYTEGAELIDSVMDVVRKEAESSDCLQGFQITHSLGGGTGAGMGTLLLSKIREDFPDRMICTFSVVPSPKVSDTVVEPYNATLSIHQLVENADETFCIDNEALYDICFRTLKLNNPGYGDLNHLVSLVMSGVTTCLRFPGQLNADLRKLAVNMIPFPRLHFFVAGFAPLIAIGTQKFKTYSVSELTQQMFDSKNMMTACDPRKGRYLTVAAMFRGKISMKDVDEQMSMVQSKNSSLFVEWIPSNVKTAVCDIAPTGLEMSATFVGNTTSIQELFKRISDQFTVMFRRKAFLHWYTGEGMDEMEFSEAESNMNDLLSEYQQYQDATIEDAEEFLVN.

GTP is bound by residues Q11, E69, S138, G142, T143, G144, N204, and N226. Position 69 (E69) interacts with Mg(2+).

It belongs to the tubulin family. As to quaternary structure, dimer of alpha and beta chains. A typical microtubule is a hollow water-filled tube with an outer diameter of 25 nm and an inner diameter of 15 nM. Alpha-beta heterodimers associate head-to-tail to form protofilaments running lengthwise along the microtubule wall with the beta-tubulin subunit facing the microtubule plus end conferring a structural polarity. Microtubules usually have 13 protofilaments but different protofilament numbers can be found in some organisms and specialized cells. Mg(2+) serves as cofactor.

The protein localises to the cytoplasm. Its subcellular location is the cytoskeleton. In terms of biological role, tubulin is the major constituent of microtubules, a cylinder consisting of laterally associated linear protofilaments composed of alpha- and beta-tubulin heterodimers. Microtubules grow by the addition of GTP-tubulin dimers to the microtubule end, where a stabilizing cap forms. Below the cap, tubulin dimers are in GDP-bound state, owing to GTPase activity of alpha-tubulin. This chain is Tubulin beta chain (TUB2), found in Encephalitozoon cuniculi (strain GB-M1) (Microsporidian parasite).